An 823-amino-acid polypeptide reads, in one-letter code: Apoptosis-resistant E3 ubiquitin protein ligase 1 (823 aa).

Residues 52–158 form a Filamin repeat; sequence GNYLDPRSCK…VAYSPYYKIF (107 aa). Residues 315-345 form a disordered region; sequence PPMHMTSSQRRPSTAVDEEDEDSPSECHTPE. The segment at 483-789 is interaction with SOCS2; that stretch reads SISDWSKNFE…THSTLPTAHT (307 aa). The HECT domain maps to 483–823; sequence SISDWSKNFE…SEGCEGFGML (341 aa). The active-site Glycyl thioester intermediate is cysteine 790.

In terms of assembly, interacts with SOCS2. Interacts (via HECT domain) with HTRA2, DIABLO/SMAC and SEPTIN4; in the cytoplasm following induction of apoptosis. Autoubiquitinated in vitro in the presence of E2 enzyme UBE2D1/UBCH5A.

The catalysed reaction is S-ubiquitinyl-[E2 ubiquitin-conjugating enzyme]-L-cysteine + [acceptor protein]-L-lysine = [E2 ubiquitin-conjugating enzyme]-L-cysteine + N(6)-ubiquitinyl-[acceptor protein]-L-lysine.. Its pathway is protein modification; protein ubiquitination. Its function is as follows. E3 ubiquitin-protein ligase that catalyzes 'Lys-11'- or 'Lys-33'-linked polyubiquitin chains, with some preference for 'Lys-33' linkages. E3 ubiquitin-protein ligases accept ubiquitin from an E2 ubiquitin-conjugating enzyme in the form of a thioester and then directly transfers the ubiquitin to targeted substrates. Ubiquitinates SEPTIN4, DIABLO/SMAC and HTRA2 in vitro. Modulates pulmonary inflammation by targeting SOCS2 for ubiquitination and subsequent degradation by the proteasome. This is Apoptosis-resistant E3 ubiquitin protein ligase 1 from Homo sapiens (Human).